Consider the following 85-residue polypeptide: Small ribosomal subunit protein uS17 (85 aa).

Belongs to the universal ribosomal protein uS17 family. As to quaternary structure, part of the 30S ribosomal subunit.

Its function is as follows. One of the primary rRNA binding proteins, it binds specifically to the 5'-end of 16S ribosomal RNA. The sequence is that of Small ribosomal subunit protein uS17 from Anaeromyxobacter sp. (strain Fw109-5).